Reading from the N-terminus, the 424-residue chain is Serine/threonine-protein kinase H1 (424 aa).

A lipid anchor (N-myristoyl glycine) is attached at Gly-2. A lipid anchor (S-palmitoyl cysteine) is attached at Cys-3. The tract at residues 56–80 (SQYAHPCPGPPTAGHTEPPSEPPRR) is disordered. In terms of domain architecture, Protein kinase spans 98-355 (YDIKALIGRG…ALQALRHPWV (258 aa)). Residues 104–112 (IGRGSFSRV) and Lys-127 contribute to the ATP site. Residue Asp-218 is the Proton acceptor of the active site. The interval 378–407 (RASSRCQSTKSAQSTRSSRSTRSNKSRRVR) is disordered. Phosphoserine; by autocatalysis occurs at positions 380 and 381. Positions 385-398 (STKSAQSTRSSRST) are enriched in low complexity.

The protein belongs to the protein kinase superfamily. CAMK Ser/Thr protein kinase family. In terms of assembly, homodimer. Autophosphorylated on serine residues. Post-translationally, myristoylated. Required for membrane association. Prerequisite for palmitoylation to occur. In terms of processing, palmitoylated. Expressed in all tissues and cell lines tested with the highest level of abundance in testis.

The protein localises to the golgi apparatus. It is found in the cytoplasm. Its subcellular location is the cytoskeleton. It localises to the microtubule organizing center. The protein resides in the centrosome. The protein localises to the nucleus speckle. It is found in the endoplasmic reticulum membrane. Its subcellular location is the cell membrane. It carries out the reaction L-seryl-[protein] + ATP = O-phospho-L-seryl-[protein] + ADP + H(+). The catalysed reaction is L-threonyl-[protein] + ATP = O-phospho-L-threonyl-[protein] + ADP + H(+). Activity depends on Ca(2+) concentration. In terms of biological role, serine/threonine protein kinase that may be involved in the regulation of pre-mRNA processing. It may phosphorylate components of nuclear splice factor compartments (SFC), such as non-snRNP splicing factors containing a serine/arginine-rich domain (SR proteins). Reversible phosphorylation of SR proteins may cause their release into the nucleoplasm and change their local concentration, thereby influencing alternative splicing. The protein is Serine/threonine-protein kinase H1 (PSKH1) of Homo sapiens (Human).